A 172-amino-acid polypeptide reads, in one-letter code: MVDKRESYTKEDLLASGRGELFGAKGPQLPAPSMLMMDRVVKMTETGGNFDKGYVEAELDINPELWFFGCHFIGDPVMPGCLGLDAMWQLVGFYLGWLGGEGKGRALGVGEVKFTGQVLPSAKKVTYRIHFKRIVNRRLVMGLADGEVLVDGRVIYTANDLKVGLFQDTSAF.

H71 is a catalytic residue.

It belongs to the thioester dehydratase family. FabA subfamily. In terms of assembly, homodimer.

The protein resides in the cytoplasm. The catalysed reaction is a (3R)-hydroxyacyl-[ACP] = a (2E)-enoyl-[ACP] + H2O. It catalyses the reaction (3R)-hydroxydecanoyl-[ACP] = (2E)-decenoyl-[ACP] + H2O. It carries out the reaction (2E)-decenoyl-[ACP] = (3Z)-decenoyl-[ACP]. The protein operates within lipid metabolism; fatty acid biosynthesis. Its function is as follows. Necessary for the introduction of cis unsaturation into fatty acids. Catalyzes the dehydration of (3R)-3-hydroxydecanoyl-ACP to E-(2)-decenoyl-ACP and then its isomerization to Z-(3)-decenoyl-ACP. Can catalyze the dehydratase reaction for beta-hydroxyacyl-ACPs with saturated chain lengths up to 16:0, being most active on intermediate chain length. In Enterobacter sp. (strain 638), this protein is 3-hydroxydecanoyl-[acyl-carrier-protein] dehydratase.